A 117-amino-acid chain; its full sequence is Probable non-functional immunoglobulin heavy variable 1-38-4 (117 aa).

The N-terminal stretch at Met-1–Ser-19 is a signal peptide. The segment at Gln-20–Ser-44 is framework-1. In terms of domain architecture, Ig-like spans Gln-20 to Arg-117. The interval Gly-45 to Gly-52 is complementarity-determining-1. The segment at Ile-53 to Trp-69 is framework-2. The complementarity-determining-2 stretch occupies residues Ile-70–Pro-77. A glycan (N-linked (GlcNAc...) asparagine) is linked at Asn-74. Residues Ser-78 to Tyr-115 are framework-3. Residues Ala-116–Arg-117 are complementarity-determining-3.

In terms of assembly, most probably, the immunoglobulin is not assembled due to incorrect folding of heavy chain. Immunoglobulins are composed of two identical heavy chains and two identical light chains; disulfide-linked.

It localises to the secreted. The protein resides in the cell membrane. In terms of biological role, probable non-functional open reading frame (ORF) of V region of the variable domain of immunoglobulin heavy chains. Non-functional ORF generally cannot participate in the synthesis of a productive immunoglobulin chain due to altered V-(D)-J or switch recombination and/or splicing site (at mRNA level) and/or conserved amino acid change (protein level). Immunoglobulins, also known as antibodies, are membrane-bound or secreted glycoproteins produced by B lymphocytes. In the recognition phase of humoral immunity, the membrane-bound immunoglobulins serve as receptors which, upon binding of a specific antigen, trigger the clonal expansion and differentiation of B lymphocytes into immunoglobulins-secreting plasma cells. Secreted immunoglobulins mediate the effector phase of humoral immunity, which results in the elimination of bound antigens. The antigen binding site is formed by the variable domain of one heavy chain, together with that of its associated light chain. Thus, each immunoglobulin has two antigen binding sites with remarkable affinity for a particular antigen. The variable domains are assembled by a process called V-(D)-J rearrangement and can then be subjected to somatic hypermutations which, after exposure to antigen and selection, allow affinity maturation for a particular antigen. The protein is Probable non-functional immunoglobulin heavy variable 1-38-4 of Homo sapiens (Human).